Here is a 1249-residue protein sequence, read N- to C-terminus: Nuclear envelope pore membrane protein POM 121 (1249 aa).

Positions 1-10 (MSPAAAAAGA) are enriched in low complexity. The tract at residues 1–27 (MSPAAAAAGAGERRRPIASVRDGRGRG) is disordered. Residues 1–34 (MSPAAAAAGAGERRRPIASVRDGRGRGCGGPARA) are cisternal side. The segment at 1–285 (MSPAAAAAGA…APPDRRFSRS (285 aa)) is required for targeting to the nucleus and nuclear pore complex. Over residues 11-25 (GERRRPIASVRDGRG) the composition is skewed to basic and acidic residues. A helical transmembrane segment spans residues 35–55 (VLLGLSLVGLLLYLVPAAAAL). The pore side stretch occupies residues 56 to 1249 (AWLTVGATAA…QARRQHTRKK (1194 aa)). Ser-94 carries the phosphoserine modification. 5 disordered regions span residues 136 to 220 (LMGS…CGTL), 319 to 530 (KEKK…LGYS), 602 to 776 (KKMQ…PVFS), 959 to 986 (PLPS…AKPA), and 1226 to 1249 (IGAG…TRKK). Residues 168–190 (ARPAPRSPPPRSPPPRSPPPSPP) are compositionally biased toward pro residues. Phosphoserine occurs at positions 345, 351, 371, 393, and 396. Positions 405–423 (IPSSSRNAITSSYSSTRGI) are enriched in polar residues. Low complexity predominate over residues 432-445 (PSSSPFSSPASSRS). 2 stretches are compositionally biased toward basic and acidic residues: residues 450–462 (RPAK…ELCH) and 472–486 (ADRE…DTTP). Over residues 491–502 (NSNSQSTPGSSG) the composition is skewed to polar residues. Residues 635–652 (PPLGLSQSGPPGLLPSPS) show a composition bias toward low complexity. The span at 683-696 (QAETATKPQATSAP) shows a compositional bias: polar residues. Low complexity-rich tracts occupy residues 712–726 (SPSS…SAPP) and 749–770 (SVTA…TAPT). Over residues 1239–1249 (LQARRQHTRKK) the composition is skewed to basic residues.

It belongs to the POM121 family.

It is found in the nucleus. It localises to the nuclear pore complex. Its subcellular location is the nucleus membrane. The protein resides in the endoplasmic reticulum membrane. Essential component of the nuclear pore complex (NPC). The repeat-containing domain may be involved in anchoring components of the pore complex to the pore membrane. When overexpressed in cells induces the formation of cytoplasmic annulate lamellae (AL). This chain is Nuclear envelope pore membrane protein POM 121 (POM121), found in Homo sapiens (Human).